Here is a 311-residue protein sequence, read N- to C-terminus: DNA replication terminus site-binding protein (311 aa).

The protein belongs to the Tus family.

The protein resides in the cytoplasm. Trans-acting protein required for termination of DNA replication. Binds to DNA replication terminator sequences (terA to terF) to prevent the passage of replication forks. The termination efficiency will be affected by the affinity of this protein for the terminator sequence. This is DNA replication terminus site-binding protein from Yersinia pseudotuberculosis serotype O:1b (strain IP 31758).